The sequence spans 132 residues: MPNNYRIAKISSLLKKEITLILQNDLENDLLRSNFINISKIELSGDLQFCKIYITSTAEEAIRKEIVEELNLAKTYIRHTLGQRIEMRRVPEMTFKDDTVLEKGLSVLKLLAELKNKKHNQDSKVEGNNKNV.

This sequence belongs to the RbfA family. Monomer. Binds 30S ribosomal subunits, but not 50S ribosomal subunits or 70S ribosomes.

The protein resides in the cytoplasm. Functionally, one of several proteins that assist in the late maturation steps of the functional core of the 30S ribosomal subunit. Associates with free 30S ribosomal subunits (but not with 30S subunits that are part of 70S ribosomes or polysomes). Required for efficient processing of 16S rRNA. May interact with the 5'-terminal helix region of 16S rRNA. The polypeptide is Ribosome-binding factor A (Prochlorococcus marinus subsp. pastoris (strain CCMP1986 / NIES-2087 / MED4)).